Consider the following 675-residue polypeptide: uncharacterized protein (675 aa).

This is an uncharacterized protein from Homo sapiens (Human).